A 534-amino-acid polypeptide reads, in one-letter code: Probable glycine dehydrogenase (decarboxylating) subunit 2 (534 aa).

Lys-273 bears the N6-(pyridoxal phosphate)lysine mark.

The protein belongs to the GcvP family. C-terminal subunit subfamily. The glycine cleavage system is composed of four proteins: P, T, L and H. In this organism, the P 'protein' is a heterodimer of two subunits. It depends on pyridoxal 5'-phosphate as a cofactor.

It catalyses the reaction N(6)-[(R)-lipoyl]-L-lysyl-[glycine-cleavage complex H protein] + glycine + H(+) = N(6)-[(R)-S(8)-aminomethyldihydrolipoyl]-L-lysyl-[glycine-cleavage complex H protein] + CO2. Functionally, the glycine cleavage system catalyzes the degradation of glycine. The P protein binds the alpha-amino group of glycine through its pyridoxal phosphate cofactor; CO(2) is released and the remaining methylamine moiety is then transferred to the lipoamide cofactor of the H protein. The polypeptide is Probable glycine dehydrogenase (decarboxylating) subunit 2 (Bacillus cereus (strain ATCC 14579 / DSM 31 / CCUG 7414 / JCM 2152 / NBRC 15305 / NCIMB 9373 / NCTC 2599 / NRRL B-3711)).